The sequence spans 658 residues: Integrator complex subunit 9 (658 aa).

Residue Lys-58 forms a Glycyl lysine isopeptide (Lys-Gly) (interchain with G-Cter in SUMO2) linkage. The interval 548–572 (DNKHVLQPPPKPTQPTSSKKRKRVN) is disordered. The Nuclear localization signal signature appears at 566 to 570 (KKRKR).

This sequence belongs to the metallo-beta-lactamase superfamily. RNA-metabolizing metallo-beta-lactamase-like family. INTS9 subfamily. As to quaternary structure, component of the Integrator complex, composed of core subunits INTS1, INTS2, INTS3, INTS4, INTS5, INTS6, INTS7, INTS8, INTS9/RC74, INTS10, INTS11/CPSF3L, INTS12, INTS13, INTS14 and INTS15. The core complex associates with protein phosphatase 2A subunits PPP2CA and PPP2R1A, to form the Integrator-PP2A (INTAC) complex. INTS9 is part of the RNA endonuclease subcomplex, composed of INTS4, INTS9, INTS11 and inositol hexakisphosphate (InsP6). Interacts with WDR73; interaction is required for the assembly of the RNA endonuclease subcomplex in the cytoplasm. Interacts with BRAT1; interaction is required for the assembly of the RNA endonuclease subcomplex. Interacts with ESRRB, ESRRB is not a core component of the Integrator complex and this association is a bridge for the interaction with the multiprotein complex Integrator; attracts the transcriptional machinery.

It is found in the nucleus. The protein resides in the cytoplasm. Component of the integrator complex, a multiprotein complex that terminates RNA polymerase II (Pol II) transcription in the promoter-proximal region of genes. The integrator complex provides a quality checkpoint during transcription elongation by driving premature transcription termination of transcripts that are unfavorably configured for transcriptional elongation: the complex terminates transcription by (1) catalyzing dephosphorylation of the C-terminal domain (CTD) of Pol II subunit POLR2A/RPB1 and SUPT5H/SPT5, (2) degrading the exiting nascent RNA transcript via endonuclease activity and (3) promoting the release of Pol II from bound DNA. The integrator complex is also involved in terminating the synthesis of non-coding Pol II transcripts, such as enhancer RNAs (eRNAs), small nuclear RNAs (snRNAs), telomerase RNAs and long non-coding RNAs (lncRNAs). Mediates recruitment of cytoplasmic dynein to the nuclear envelope, probably as component of the integrator complex. The polypeptide is Integrator complex subunit 9 (Ints9) (Mus musculus (Mouse)).